Consider the following 303-residue polypeptide: Ribose-5-phosphate isomerase (303 aa).

Gly residues predominate over residues 22 to 33 (AGGAASGGGGNN). The disordered stretch occupies residues 22 to 75 (AGGAASGGGGNNWGLSGSHVQLPGRAHSETRGDKGGSSAGGPAPSTMSKAEEAK). At R52 the chain carries Omega-N-methylarginine. S99 bears the Phosphoserine mark.

The protein belongs to the ribose 5-phosphate isomerase family. As to expression, widely expressed, with highest levels in testis.

It carries out the reaction aldehydo-D-ribose 5-phosphate = D-ribulose 5-phosphate. Its pathway is carbohydrate degradation; pentose phosphate pathway; D-ribose 5-phosphate from D-ribulose 5-phosphate (non-oxidative stage): step 1/1. The sequence is that of Ribose-5-phosphate isomerase (Rpia) from Mus musculus (Mouse).